The chain runs to 61 residues: MAKKSMIAKAQRKPKFQVRAYTRCRICGRPHSVYRDFGLCRVCLRKMGSEGLIPGLRKASW.

Zn(2+)-binding residues include C24, C27, C40, and C43.

The protein belongs to the universal ribosomal protein uS14 family. Zinc-binding uS14 subfamily. As to quaternary structure, part of the 30S ribosomal subunit. Contacts proteins S3 and S10. The cofactor is Zn(2+).

Its function is as follows. Binds 16S rRNA, required for the assembly of 30S particles and may also be responsible for determining the conformation of the 16S rRNA at the A site. The sequence is that of Small ribosomal subunit protein uS14 from Helicobacter pylori (strain G27).